We begin with the raw amino-acid sequence, 313 residues long: N-acetyl-gamma-glutamyl-phosphate reductase 2 (313 aa).

Residue cysteine 117 is part of the active site.

Belongs to the NAGSA dehydrogenase family. Type 2 subfamily.

The protein localises to the cytoplasm. It carries out the reaction N-acetyl-L-glutamate 5-semialdehyde + phosphate + NADP(+) = N-acetyl-L-glutamyl 5-phosphate + NADPH + H(+). It functions in the pathway amino-acid biosynthesis; L-arginine biosynthesis; N(2)-acetyl-L-ornithine from L-glutamate: step 3/4. Catalyzes the NADPH-dependent reduction of N-acetyl-5-glutamyl phosphate to yield N-acetyl-L-glutamate 5-semialdehyde. This Pseudomonas putida (strain ATCC 47054 / DSM 6125 / CFBP 8728 / NCIMB 11950 / KT2440) protein is N-acetyl-gamma-glutamyl-phosphate reductase 2.